Here is a 271-residue protein sequence, read N- to C-terminus: Cell surface glycoprotein CD200 receptor 2 (271 aa).

The signal sequence occupies residues 1–23; sequence MSAPRLLISIIIMVSASSSSCMG. The Extracellular portion of the chain corresponds to 24-239; sequence GKQMTQNYST…TSGSPALSLL (216 aa). Residues Asn30, Asn39, Asn86, Asn92, Asn189, and Asn217 are each glycosylated (N-linked (GlcNAc...) asparagine). The Ig-like V-type domain maps to 46-132; the sequence is MDINAVLCCP…YRGIVVTPDG (87 aa). The 89-residue stretch at 133–221 folds into the Ig-like C2-type domain; sequence NFHRGYHLQV…SHLTGNKSLS (89 aa). Cys160 and Cys209 are disulfide-bonded. Residues 240 to 260 traverse the membrane as a helical segment; sequence IILYVKLSLFVVILVTTGFVF. Topologically, residues 261–271 are cytoplasmic; that stretch reads FQRINHVRKVL.

It belongs to the CD200R family.

It is found in the membrane. Its function is as follows. May be a receptor for the CD200/OX2 cell surface glycoprotein. In Homo sapiens (Human), this protein is Cell surface glycoprotein CD200 receptor 2 (CD200R1L).